The sequence spans 208 residues: Uracil phosphoribosyltransferase (208 aa).

Residues R78, R103, and 130–138 (DPMLATGGS) contribute to the 5-phospho-alpha-D-ribose 1-diphosphate site. Uracil-binding positions include I193 and 198-200 (GDA). 5-phospho-alpha-D-ribose 1-diphosphate is bound at residue D199.

This sequence belongs to the UPRTase family. It depends on Mg(2+) as a cofactor.

It carries out the reaction UMP + diphosphate = 5-phospho-alpha-D-ribose 1-diphosphate + uracil. It participates in pyrimidine metabolism; UMP biosynthesis via salvage pathway; UMP from uracil: step 1/1. With respect to regulation, allosterically activated by GTP. Its function is as follows. Catalyzes the conversion of uracil and 5-phospho-alpha-D-ribose 1-diphosphate (PRPP) to UMP and diphosphate. The polypeptide is Uracil phosphoribosyltransferase (Pelobacter propionicus (strain DSM 2379 / NBRC 103807 / OttBd1)).